The chain runs to 156 residues: Small ribosomal subunit protein uS7 (156 aa).

This sequence belongs to the universal ribosomal protein uS7 family. Part of the 30S ribosomal subunit. Contacts proteins S9 and S11.

In terms of biological role, one of the primary rRNA binding proteins, it binds directly to 16S rRNA where it nucleates assembly of the head domain of the 30S subunit. Is located at the subunit interface close to the decoding center, probably blocks exit of the E-site tRNA. In Bacillus licheniformis (strain ATCC 14580 / DSM 13 / JCM 2505 / CCUG 7422 / NBRC 12200 / NCIMB 9375 / NCTC 10341 / NRRL NRS-1264 / Gibson 46), this protein is Small ribosomal subunit protein uS7.